We begin with the raw amino-acid sequence, 495 residues long: UDP-glycosyltransferase 73C5 (495 aa).

Residues Ile146–Leu162 traverse the membrane as a helical segment. UDP-alpha-D-glucose contacts are provided by residues Ser296, Ser356–Gln358, His373–Glu381, and Phe395–Gln398. Residues Met446–His477 are disordered. Basic and acidic residues predominate over residues Asp450 to Glu471.

Belongs to the UDP-glycosyltransferase family. As to expression, elongating hypocotyls and root-specific. Expressed in the vascular system, in meristematic tissues of the root tip, and in the vasculature of the hypocotyl right after germination. In late stage of flower development, expressed in petals, and in abscission zones.

The protein localises to the membrane. In terms of biological role, specifically catalyzes 23-O-glucosylation of brassinosteroids, resulting probably in their inactivation. Also, involved in the O-glucosylation of trans-zeatin and dihydrozeatin. Active in vitro on cis-zeatin, dihydrozeatin-9-N-Glc, and olomoucine. Also involved in the detoxification of the Fusarium mycotoxin deoxynivalenol by the transfer of glucose from UDP-glucose to the hydroxyl group at C-3. Possesses low quercetin 7-O-glucosyltransferase and 4'-O-glucosyltransferase activities in vitro. This Arabidopsis thaliana (Mouse-ear cress) protein is UDP-glycosyltransferase 73C5 (UGT73C5).